We begin with the raw amino-acid sequence, 373 residues long: Probable tRNA sulfurtransferase (373 aa).

One can recognise a THUMP domain in the interval 54–158; it reads NKNIEELSKV…NDVAYFYHKI (105 aa). Residues 176–177, 201–202, Lys-256, Gly-278, and Gln-287 each bind ATP; these read LF and NF.

Belongs to the ThiI family.

Its subcellular location is the cytoplasm. It carries out the reaction [ThiI sulfur-carrier protein]-S-sulfanyl-L-cysteine + a uridine in tRNA + 2 reduced [2Fe-2S]-[ferredoxin] + ATP + H(+) = [ThiI sulfur-carrier protein]-L-cysteine + a 4-thiouridine in tRNA + 2 oxidized [2Fe-2S]-[ferredoxin] + AMP + diphosphate. The catalysed reaction is [ThiS sulfur-carrier protein]-C-terminal Gly-Gly-AMP + S-sulfanyl-L-cysteinyl-[cysteine desulfurase] + AH2 = [ThiS sulfur-carrier protein]-C-terminal-Gly-aminoethanethioate + L-cysteinyl-[cysteine desulfurase] + A + AMP + 2 H(+). Its pathway is cofactor biosynthesis; thiamine diphosphate biosynthesis. Catalyzes the ATP-dependent transfer of a sulfur to tRNA to produce 4-thiouridine in position 8 of tRNAs, which functions as a near-UV photosensor. Also catalyzes the transfer of sulfur to the sulfur carrier protein ThiS, forming ThiS-thiocarboxylate. This is a step in the synthesis of thiazole, in the thiamine biosynthesis pathway. The sulfur is donated as persulfide by IscS. This chain is Probable tRNA sulfurtransferase, found in Saccharolobus islandicus (strain M.16.4 / Kamchatka #3) (Sulfolobus islandicus).